The following is a 453-amino-acid chain: Aspartate aminotransferase, chloroplastic (453 aa).

The N-terminal 44 residues, 1–44 (MASLMLSLGSTSLLPREINKDKLKLGTSASNPFLKAKSFSRVTM), are a transit peptide targeting the chloroplast. 3 residues coordinate L-aspartate: Gly-85, Trp-181, and Asn-234. Residue Lys-298 is modified to N6-(pyridoxal phosphate)lysine. L-aspartate is bound at residue Arg-427.

This sequence belongs to the class-I pyridoxal-phosphate-dependent aminotransferase family. As to quaternary structure, homodimer. Pyridoxal 5'-phosphate is required as a cofactor.

Its subcellular location is the plastid. The protein localises to the chloroplast. It is found in the amyloplast. The enzyme catalyses L-aspartate + 2-oxoglutarate = oxaloacetate + L-glutamate. Its function is as follows. Amino acid aminotransferase important for the metabolism of amino acids and Krebs-cycle related organic acids. No activity with D-Asp or D-Ala as amino donors. In plants, it is involved in nitrogen metabolism and in aspects of carbon and energy metabolism. The polypeptide is Aspartate aminotransferase, chloroplastic (ASP5) (Arabidopsis thaliana (Mouse-ear cress)).